A 92-amino-acid polypeptide reads, in one-letter code: Small ribosomal subunit protein bS20 (92 aa).

The disordered stretch occupies residues Met1–His20.

The protein belongs to the bacterial ribosomal protein bS20 family.

Its function is as follows. Binds directly to 16S ribosomal RNA. This Methylococcus capsulatus (strain ATCC 33009 / NCIMB 11132 / Bath) protein is Small ribosomal subunit protein bS20.